The following is a 261-amino-acid chain: 5'-nucleotidase SurE (261 aa).

Asp8, Asp9, Ser39, and Asn91 together coordinate a divalent metal cation.

The protein belongs to the SurE nucleotidase family. A divalent metal cation is required as a cofactor.

Its subcellular location is the cytoplasm. It catalyses the reaction a ribonucleoside 5'-phosphate + H2O = a ribonucleoside + phosphate. Functionally, nucleotidase that shows phosphatase activity on nucleoside 5'-monophosphates. In Polaromonas naphthalenivorans (strain CJ2), this protein is 5'-nucleotidase SurE.